The chain runs to 498 residues: NAD(P)H-quinone oxidoreductase chain 4, chloroplastic (498 aa).

The next 14 membrane-spanning stretches (helical) occupy residues 4–24 (LPWLTLIVLFPFSASFLIPLL), 37–57 (LGICALEFLLITFTFCCQFHL), 87–107 (MGLILLTGFITTLAILAAWPV), 111–131 (VRLFYFLMLAMYSGQIGLFAS), 134–154 (ILLFFFMWELELIPVYLLLSM), 167–187 (FLLYTAGGSIFLLVGSLTMGL), 207–227 (IAVETALYFSFLIAYAVKLPI), 242–262 (HYSTCMLLAGILLKMGGYGLI), 274–294 (FLFSPLLVTMGAVQIAYASLI), 305–325 (IAYSSVSHMGFVIIGISSITD), 331–351 (AILQMISHGLIGAALFFLAGI), 386–406 (LALPGMSSFVAEFLIFLGIVT), 417–437 (IILFIGAIGVILTPIYLLSML), and 461–481 (IFISVFILLPILGIGIYPNLV).

This sequence belongs to the complex I subunit 4 family.

It is found in the plastid. The protein resides in the chloroplast thylakoid membrane. The enzyme catalyses a plastoquinone + NADH + (n+1) H(+)(in) = a plastoquinol + NAD(+) + n H(+)(out). It carries out the reaction a plastoquinone + NADPH + (n+1) H(+)(in) = a plastoquinol + NADP(+) + n H(+)(out). The sequence is that of NAD(P)H-quinone oxidoreductase chain 4, chloroplastic from Psilotum nudum (Whisk fern).